Reading from the N-terminus, the 473-residue chain is Serine carboxypeptidase-like 25 (473 aa).

Positions 1–22 (MAMAKLAIFTTLMAILVMTSQG) are cleaved as a signal peptide. N-linked (GlcNAc...) asparagine glycans are attached at residues Asn-46 and Asn-143. 3 disulfides stabilise this stretch: Cys-92/Cys-358, Cys-252/Cys-263, and Cys-288/Cys-326. Ser-185 is an active-site residue. N-linked (GlcNAc...) asparagine glycosylation is found at Asn-289, Asn-299, Asn-347, and Asn-367. Residues Asp-395 and His-447 contribute to the active site.

The protein belongs to the peptidase S10 family. Ubiquitous.

The protein resides in the secreted. In terms of biological role, probable carboxypeptidase. The sequence is that of Serine carboxypeptidase-like 25 (SCPL25) from Arabidopsis thaliana (Mouse-ear cress).